The primary structure comprises 464 residues: Cytoplasmic tRNA 2-thiolation protein 2 (464 aa).

It belongs to the CTU2/NCS2 family.

The protein localises to the cytoplasm. The protein operates within tRNA modification; 5-methoxycarbonylmethyl-2-thiouridine-tRNA biosynthesis. In terms of biological role, plays a central role in 2-thiolation of mcm(5)S(2)U at tRNA wobble positions of tRNA(Lys), tRNA(Glu) and tRNA(Gln). May act by forming a heterodimer with NCS6/CTU1 that ligates sulfur from thiocarboxylated URM1 onto the uridine of tRNAs at wobble position. This Oryza sativa subsp. japonica (Rice) protein is Cytoplasmic tRNA 2-thiolation protein 2.